A 276-amino-acid chain; its full sequence is Integrin-binding sialoprotein (276 aa).

The N-terminal stretch at 1–16 (MRSALLLACLLATASA) is a signal peptide. Residues 54-251 (HRYKGSDSSE…EEPARGDSYR (198 aa)) are disordered. Residues 61 to 75 (SSEEEGDGSEEEEEG) are compositionally biased toward acidic residues. A compositionally biased stretch (basic and acidic residues) spans 106–119 (QDCKGGQKGTRGDS). The Cell attachment site motif lies at 116 to 118 (RGD). Residues 120-144 (GDEDSDEEEEEEEEEEEEEEVEEQD) are compositionally biased toward acidic residues. Positions 145–165 (VSVNGTSTNTTAETPHGNNTV) are enriched in polar residues. 3 N-linked (GlcNAc...) asparagine glycosylation sites follow: N148, N153, and N162. A compositionally biased stretch (acidic residues) spans 167–188 (AEEEEDDDEEEEEEEEEEEEAE). Low complexity predominate over residues 189–200 (ATTAAATTAQDE). The Cell attachment site motif lies at 228–230 (RGD). The Integrin-binding motif signature appears at 246–248 (RGD). Residues Y272 and Y273 each carry the sulfotyrosine modification.

In terms of assembly, monomer. Interacts with integrins; the interaction promotes cell adhesion. In terms of processing, phosphorylated on serine and threonine residues.

The protein localises to the secreted. Functionally, binds tightly to hydroxyapatite. Appears to form an integral part of the mineralized matrix. Probably important to cell-matrix interaction. Promotes adhesion and migration of various cells via the alpha-V/beta-3 integrin receptor (ITGAV:ITGB3). The protein is Integrin-binding sialoprotein (IBSP) of Gallus gallus (Chicken).